Here is a 345-residue protein sequence, read N- to C-terminus: Biotin synthase (345 aa).

The region spanning 38-256 (RQVQVSTLLS…IAVARIMMPS (219 aa)) is the Radical SAM core domain. [4Fe-4S] cluster-binding residues include Cys-53, Cys-57, and Cys-60. [2Fe-2S] cluster is bound by residues Cys-97, Cys-128, Cys-188, and Arg-260.

The protein belongs to the radical SAM superfamily. Biotin synthase family. Homodimer. It depends on [4Fe-4S] cluster as a cofactor. The cofactor is [2Fe-2S] cluster.

The catalysed reaction is (4R,5S)-dethiobiotin + (sulfur carrier)-SH + 2 reduced [2Fe-2S]-[ferredoxin] + 2 S-adenosyl-L-methionine = (sulfur carrier)-H + biotin + 2 5'-deoxyadenosine + 2 L-methionine + 2 oxidized [2Fe-2S]-[ferredoxin]. The protein operates within cofactor biosynthesis; biotin biosynthesis; biotin from 7,8-diaminononanoate: step 2/2. In terms of biological role, catalyzes the conversion of dethiobiotin (DTB) to biotin by the insertion of a sulfur atom into dethiobiotin via a radical-based mechanism. This is Biotin synthase from Yersinia pseudotuberculosis serotype O:1b (strain IP 31758).